Here is a 712-residue protein sequence, read N- to C-terminus: Polyribonucleotide nucleotidyltransferase (712 aa).

Mg(2+)-binding residues include D487 and D493. Residues 554–613 (PKIITMTINPDKIRDVIGPSGKQINKIIEETGVKIDIEQDGTVFISSINQEMNDKAKKII) form the KH domain. One can recognise an S1 motif domain in the interval 623–691 (GEIYEGKVKR…KQGRVNLSRK (69 aa)).

It belongs to the polyribonucleotide nucleotidyltransferase family. The cofactor is Mg(2+).

It localises to the cytoplasm. The catalysed reaction is RNA(n+1) + phosphate = RNA(n) + a ribonucleoside 5'-diphosphate. Its function is as follows. Involved in mRNA degradation. Catalyzes the phosphorolysis of single-stranded polyribonucleotides processively in the 3'- to 5'-direction. In Bacillus anthracis, this protein is Polyribonucleotide nucleotidyltransferase.